Consider the following 143-residue polypeptide: Hemoglobin anodic subunit alpha (143 aa).

Ser-2 is modified (N-acetylserine). In terms of domain architecture, Globin spans 2–143; the sequence is SLSAKDMAVV…FTLALSERYR (142 aa). His-60 provides a ligand contact to O2. His-89 lines the heme b pocket.

This sequence belongs to the globin family. In terms of assembly, heterotetramer of two alpha chains and two beta chains. Red blood cells.

Its function is as follows. Involved in oxygen transport from gills to the various peripheral tissues. This Anguilla anguilla (European freshwater eel) protein is Hemoglobin anodic subunit alpha (hba).